The chain runs to 433 residues: L-saccharopine oxidase (433 aa).

Positions 1 to 18 (MSRTIVIVGCGVFGLSTA) are cleaved as a signal peptide. 4 N-linked (GlcNAc...) asparagine glycosylation sites follow: Asn-24, Asn-119, Asn-188, and Asn-229.

It belongs to the MSOX/MTOX family. Monomer. FAD is required as a cofactor.

The protein resides in the secreted. Its subcellular location is the cytoplasm. It localises to the nucleus. The enzyme catalyses L-saccharopine + O2 + H2O = (S)-2-amino-6-oxohexanoate + L-glutamate + H2O2. The chain is L-saccharopine oxidase from Schizosaccharomyces pombe (strain 972 / ATCC 24843) (Fission yeast).